Here is a 419-residue protein sequence, read N- to C-terminus: Hyaluronan synthase (419 aa).

5 helical membrane-spanning segments follow: residues 8–28 (LIVLSFIFLISILIYLNMYLF), 33–53 (VGIYGVILITYLVIKLGLSFL), 318–338 (IVALWTIFEVVMFMMLIVAIG), 345–365 (AIQLDLIKLFAFLSIIFIVAL), and 376–396 (PASFLLSPLYGILHLFVLQPL).

The protein belongs to the NodC/HAS family. The cofactor is Mg(2+).

The protein resides in the cell membrane. It carries out the reaction [hyaluronan](n) + UDP-N-acetyl-alpha-D-glucosamine = N-acetyl-beta-D-glucosaminyl-(1-&gt;4)-[hyaluronan](n) + UDP + H(+). The enzyme catalyses N-acetyl-beta-D-glucosaminyl-(1-&gt;4)-[hyaluronan](n) + UDP-alpha-D-glucuronate = [hyaluronan](n+1) + UDP + H(+). Its pathway is glycan biosynthesis; hyaluronan biosynthesis. Its function is as follows. Glycosaminoglycan synthesis. The hyaluronic acid capsule is involved in the pathogenicity of group A Streptococci; it may be the major virulence determinant. This is Hyaluronan synthase (hasA) from Streptococcus pyogenes serotype M1.